A 71-amino-acid polypeptide reads, in one-letter code: Small ribosomal subunit protein bS21 (71 aa).

Over residues 48-59 (EKASLAKRHAKR) the composition is skewed to basic residues. Positions 48 to 71 (EKASLAKRHAKRNARENARNTRLY) are disordered. The span at 60–71 (NARENARNTRLY) shows a compositional bias: basic and acidic residues.

Belongs to the bacterial ribosomal protein bS21 family.

The chain is Small ribosomal subunit protein bS21 from Actinobacillus pleuropneumoniae serotype 5b (strain L20).